Reading from the N-terminus, the 129-residue chain is DNA base-flipping protein (129 aa).

The protein belongs to the MGMT family. ATL subfamily. As to quaternary structure, interacts with HelD and UvrA.

Functionally, involved in DNA damage recognition. Binds DNA containing O(6)-methylguanine and larger O(6)-alkylguanine adducts, and to double-stranded DNA that contains an AP (apurinic/apyrimidinic) site. Binds to the damaged base and flips the base out of the DNA duplex into an extrahelical conformation, which allows processing by repair proteins. Works in partnership with the nucleotide excision repair (NER) pathway to enhance the repair of the O(6)-alkylguanine adducts larger than the methyl adduct. Also prevents methyl-directed mismatch repair (MMR)-mediated attack of the O(6)-alkylguanine:T mispairs for the larger alkyl groups. This is DNA base-flipping protein from Escherichia coli (strain K12).